Reading from the N-terminus, the 193-residue chain is Dual-action ribosomal maturation protein DarP (193 aa).

Residues Met-1–Glu-10 are compositionally biased toward basic and acidic residues. Disordered regions lie at residues Met-1–Arg-20 and Gln-171–Glu-193. Residues Gly-181–Glu-193 are compositionally biased toward acidic residues.

Belongs to the DarP family.

It localises to the cytoplasm. Functionally, member of a network of 50S ribosomal subunit biogenesis factors which assembles along the 30S-50S interface, preventing incorrect 23S rRNA structures from forming. Promotes peptidyl transferase center (PTC) maturation. The protein is Dual-action ribosomal maturation protein DarP of Xanthomonas oryzae pv. oryzae (strain MAFF 311018).